The chain runs to 306 residues: Glutamyl-Q tRNA(Asp) synthetase (306 aa).

Residues 29 to 33 and Asp-65 each bind L-glutamate; that span reads RFAPS. Residues 32 to 42 carry the 'HIGH' region motif; that stretch reads PSPTGPLHLGN. Positions 121, 123, 141, and 145 each coordinate Zn(2+). Residues Tyr-188 and Arg-206 each contribute to the L-glutamate site. The 'KMSKS' region motif lies at 244 to 248; it reads KLAKR. Position 247 (Lys-247) interacts with ATP.

It belongs to the class-I aminoacyl-tRNA synthetase family. GluQ subfamily. Zn(2+) serves as cofactor.

Catalyzes the tRNA-independent activation of glutamate in presence of ATP and the subsequent transfer of glutamate onto a tRNA(Asp). Glutamate is transferred on the 2-amino-5-(4,5-dihydroxy-2-cyclopenten-1-yl) moiety of the queuosine in the wobble position of the QUC anticodon. The sequence is that of Glutamyl-Q tRNA(Asp) synthetase from Prochlorococcus marinus (strain MIT 9313).